Here is a 345-residue protein sequence, read N- to C-terminus: Methylthioribose-1-phosphate isomerase (345 aa).

Substrate contacts are provided by residues 47–49, R90, and Q197; that span reads RGA. Residue D238 is the Proton donor of the active site. Substrate is bound at residue 248–249; that stretch reads NK.

It belongs to the eIF-2B alpha/beta/delta subunits family. MtnA subfamily.

The catalysed reaction is 5-(methylsulfanyl)-alpha-D-ribose 1-phosphate = 5-(methylsulfanyl)-D-ribulose 1-phosphate. Its pathway is amino-acid biosynthesis; L-methionine biosynthesis via salvage pathway; L-methionine from S-methyl-5-thio-alpha-D-ribose 1-phosphate: step 1/6. Catalyzes the interconversion of methylthioribose-1-phosphate (MTR-1-P) into methylthioribulose-1-phosphate (MTRu-1-P). The polypeptide is Methylthioribose-1-phosphate isomerase (Caldanaerobacter subterraneus subsp. tengcongensis (strain DSM 15242 / JCM 11007 / NBRC 100824 / MB4) (Thermoanaerobacter tengcongensis)).